The primary structure comprises 427 residues: Serine--tRNA ligase (427 aa).

231–233 lines the L-serine pocket; the sequence is TAE. 262-264 contributes to the ATP binding site; the sequence is RSE. An L-serine-binding site is contributed by glutamate 285. 349–352 contributes to the ATP binding site; sequence EISS. Serine 385 contributes to the L-serine binding site.

It belongs to the class-II aminoacyl-tRNA synthetase family. Type-1 seryl-tRNA synthetase subfamily. As to quaternary structure, homodimer. The tRNA molecule binds across the dimer.

Its subcellular location is the cytoplasm. It carries out the reaction tRNA(Ser) + L-serine + ATP = L-seryl-tRNA(Ser) + AMP + diphosphate + H(+). The enzyme catalyses tRNA(Sec) + L-serine + ATP = L-seryl-tRNA(Sec) + AMP + diphosphate + H(+). Its pathway is aminoacyl-tRNA biosynthesis; selenocysteinyl-tRNA(Sec) biosynthesis; L-seryl-tRNA(Sec) from L-serine and tRNA(Sec): step 1/1. Functionally, catalyzes the attachment of serine to tRNA(Ser). Is also able to aminoacylate tRNA(Sec) with serine, to form the misacylated tRNA L-seryl-tRNA(Sec), which will be further converted into selenocysteinyl-tRNA(Sec). The polypeptide is Serine--tRNA ligase (Rhizobium johnstonii (strain DSM 114642 / LMG 32736 / 3841) (Rhizobium leguminosarum bv. viciae)).